The following is a 302-amino-acid chain: Oxygen-dependent coproporphyrinogen-III oxidase (302 aa).

Serine 94 provides a ligand contact to substrate. Histidine 98 and histidine 108 together coordinate a divalent metal cation. Histidine 108 serves as the catalytic Proton donor. 110 to 112 (NVR) contributes to the substrate binding site. A divalent metal cation is bound by residues histidine 147 and histidine 177. Residues 242 to 277 (YVEFNLVFDRGTLFGLQSGGRTESILMSMPPVANWR) are important for dimerization. A substrate-binding site is contributed by 260–262 (GGR).

Belongs to the aerobic coproporphyrinogen-III oxidase family. In terms of assembly, homodimer. A divalent metal cation serves as cofactor.

The protein localises to the cytoplasm. The catalysed reaction is coproporphyrinogen III + O2 + 2 H(+) = protoporphyrinogen IX + 2 CO2 + 2 H2O. It participates in porphyrin-containing compound metabolism; protoporphyrin-IX biosynthesis; protoporphyrinogen-IX from coproporphyrinogen-III (O2 route): step 1/1. In terms of biological role, involved in the heme biosynthesis. Catalyzes the aerobic oxidative decarboxylation of propionate groups of rings A and B of coproporphyrinogen-III to yield the vinyl groups in protoporphyrinogen-IX. This chain is Oxygen-dependent coproporphyrinogen-III oxidase, found in Ralstonia nicotianae (strain ATCC BAA-1114 / GMI1000) (Ralstonia solanacearum).